The sequence spans 474 residues: B-cell CLL/lymphoma 6 member B protein (474 aa).

Residues Thr38 to Pro105 enclose the BTB domain. 2 disordered regions span residues Pro144–Lys190 and Gly210–Ser249. Residues Pro150–Ser160 are compositionally biased toward pro residues. A compositionally biased stretch (basic and acidic residues) spans Arg162–Thr172. 3 stretches are compositionally biased toward polar residues: residues Glu173–Ser183, Gly210–Pro220, and Glu240–Ser249. 5 consecutive C2H2-type zinc fingers follow at residues Tyr323–His345, Tyr351–His373, Tyr379–His401, Tyr407–His429, and Tyr435–His458.

Associates with BCL6 through the BTB domain. In terms of tissue distribution, ubiquitously expressed with higher expression found in heart and lung.

The protein resides in the nucleus. Functionally, acts as a sequence-specific transcriptional repressor in association with BCL6. Necessary for activation of naive T-cells to antigenic stimulation. May attenuate the regulatory effect of BCL6 on antigenic activation of naive CD4 T-cells by forming a heterodimer with BCL6. The sequence is that of B-cell CLL/lymphoma 6 member B protein (Bcl6b) from Mus musculus (Mouse).